The chain runs to 319 residues: Ribosomal RNA small subunit methyltransferase H (319 aa).

S-adenosyl-L-methionine-binding positions include 34–36 (GGH), Asp54, Phe83, Asp104, and Gln111.

Belongs to the methyltransferase superfamily. RsmH family.

Its subcellular location is the cytoplasm. The catalysed reaction is cytidine(1402) in 16S rRNA + S-adenosyl-L-methionine = N(4)-methylcytidine(1402) in 16S rRNA + S-adenosyl-L-homocysteine + H(+). Functionally, specifically methylates the N4 position of cytidine in position 1402 (C1402) of 16S rRNA. The sequence is that of Ribosomal RNA small subunit methyltransferase H from Lactiplantibacillus plantarum (strain ATCC BAA-793 / NCIMB 8826 / WCFS1) (Lactobacillus plantarum).